A 408-amino-acid chain; its full sequence is Putative transporter AmpG 2 (408 aa).

The next 11 helical transmembrane spans lie at 11–31 (IFNI…YLLT), 49–69 (IGLF…GPLL), 84–104 (YCLV…TSFN), 110–130 (IPFV…DMLI), 154–174 (FRIG…IISW), 177–197 (VYRT…FYPL), 224–244 (CIVI…LSIM), 261–281 (VGYK…GGFL), 294–311 (VLIY…LYFL), 353–373 (IALI…ISGY), and 382–402 (YFFI…LYLP).

It belongs to the major facilitator superfamily.

The protein localises to the cell inner membrane. The chain is Putative transporter AmpG 2 (ampG2) from Rickettsia prowazekii (strain Madrid E).